A 353-amino-acid polypeptide reads, in one-letter code: Chorismate synthase (353 aa).

NADP(+) contacts are provided by Arg-48 and Arg-54. FMN is bound by residues 125 to 127, 238 to 239, Gly-278, 293 to 297, and Arg-319; these read RSS, NA, and KPTSS.

It belongs to the chorismate synthase family. Homotetramer. Requires FMNH2 as cofactor.

The enzyme catalyses 5-O-(1-carboxyvinyl)-3-phosphoshikimate = chorismate + phosphate. The protein operates within metabolic intermediate biosynthesis; chorismate biosynthesis; chorismate from D-erythrose 4-phosphate and phosphoenolpyruvate: step 7/7. Catalyzes the anti-1,4-elimination of the C-3 phosphate and the C-6 proR hydrogen from 5-enolpyruvylshikimate-3-phosphate (EPSP) to yield chorismate, which is the branch point compound that serves as the starting substrate for the three terminal pathways of aromatic amino acid biosynthesis. This reaction introduces a second double bond into the aromatic ring system. The chain is Chorismate synthase from Bordetella bronchiseptica (strain ATCC BAA-588 / NCTC 13252 / RB50) (Alcaligenes bronchisepticus).